The sequence spans 93 residues: Small ribosomal subunit protein uS19 (93 aa).

It belongs to the universal ribosomal protein uS19 family.

Protein S19 forms a complex with S13 that binds strongly to the 16S ribosomal RNA. This is Small ribosomal subunit protein uS19 from Renibacterium salmoninarum (strain ATCC 33209 / DSM 20767 / JCM 11484 / NBRC 15589 / NCIMB 2235).